Reading from the N-terminus, the 514-residue chain is Putative fucosyltransferase 10 (514 aa).

Asn-185, Asn-210, Asn-355, Asn-377, and Asn-456 each carry an N-linked (GlcNAc...) asparagine glycan.

It belongs to the glycosyltransferase 37 family. In terms of tissue distribution, expressed in root, leaves, stems and seedlings.

Its subcellular location is the golgi apparatus. It functions in the pathway protein modification; protein glycosylation. Functionally, may be involved in cell wall biosynthesis. May act as a fucosyltransferase. In Arabidopsis thaliana (Mouse-ear cress), this protein is Putative fucosyltransferase 10 (FUT10).